The sequence spans 92 residues: Small ribosomal subunit protein uS19 (92 aa).

It belongs to the universal ribosomal protein uS19 family.

Functionally, protein S19 forms a complex with S13 that binds strongly to the 16S ribosomal RNA. The protein is Small ribosomal subunit protein uS19 of Methylobacterium nodulans (strain LMG 21967 / CNCM I-2342 / ORS 2060).